Reading from the N-terminus, the 1108-residue chain is DNA-directed RNA polymerase subunit beta (1108 aa).

Belongs to the RNA polymerase beta chain family. In plastids the minimal PEP RNA polymerase catalytic core is composed of four subunits: alpha, beta, beta', and beta''. When a (nuclear-encoded) sigma factor is associated with the core the holoenzyme is formed, which can initiate transcription.

It is found in the plastid. Its subcellular location is the chloroplast. It catalyses the reaction RNA(n) + a ribonucleoside 5'-triphosphate = RNA(n+1) + diphosphate. DNA-dependent RNA polymerase catalyzes the transcription of DNA into RNA using the four ribonucleoside triphosphates as substrates. This chain is DNA-directed RNA polymerase subunit beta, found in Gnetum parvifolium (Small-leaved jointfir).